Here is a 182-residue protein sequence, read N- to C-terminus: RSCEICHNFGADCESRAEECDSPEDQCGTVLLEVSQAPISFRTIHKNCFSSSLCKLERFDINIGHDSFMRGRIHCCDEEKCEGLQFPGLPLSLPNGYYCPGILGLFTVDSSEHEAICRGTETKCINIAGFRKERYPADIAYNIKGCVSSCPELSLSNRTHEEHRNDLIKVECTDASKIIPSE.

8 cysteine pairs are disulfide-bonded: cysteine 3–cysteine 27, cysteine 6–cysteine 13, cysteine 20–cysteine 48, cysteine 54–cysteine 75, cysteine 76–cysteine 81, cysteine 99–cysteine 124, cysteine 117–cysteine 146, and cysteine 150–cysteine 172. The N-linked (GlcNAc...) asparagine glycan is linked to asparagine 157.

This sequence belongs to the CNF-like-inhibitor family. In terms of assembly, heterotrimer of 2 subunits A and 1 subunit B. Post-translationally, N-glycosylation is not important for activity, since deglycosylation does not change its PLA2 inhibitory activity. As to expression, expressed by the liver.

It localises to the secreted. Strongly inhibits its own venom PLA2 and all other PLA2s tested including Elapid, Crotalid and Viperid venom PLA2s, as well as honeybee PLA2s. This chain is Phospholipase A2 inhibitor gamma subunit A, found in Laticauda semifasciata (Black-banded sea krait).